Consider the following 229-residue polypeptide: Deoxyribose-phosphate aldolase (229 aa).

Catalysis depends on D96, which acts as the Proton donor/acceptor. The Schiff-base intermediate with acetaldehyde role is filled by K166. The Proton donor/acceptor role is filled by K195.

Belongs to the DeoC/FbaB aldolase family. DeoC type 1 subfamily.

It is found in the cytoplasm. It carries out the reaction 2-deoxy-D-ribose 5-phosphate = D-glyceraldehyde 3-phosphate + acetaldehyde. It participates in carbohydrate degradation; 2-deoxy-D-ribose 1-phosphate degradation; D-glyceraldehyde 3-phosphate and acetaldehyde from 2-deoxy-alpha-D-ribose 1-phosphate: step 2/2. In terms of biological role, catalyzes a reversible aldol reaction between acetaldehyde and D-glyceraldehyde 3-phosphate to generate 2-deoxy-D-ribose 5-phosphate. This is Deoxyribose-phosphate aldolase from Micrococcus luteus (strain ATCC 4698 / DSM 20030 / JCM 1464 / CCM 169 / CCUG 5858 / IAM 1056 / NBRC 3333 / NCIMB 9278 / NCTC 2665 / VKM Ac-2230) (Micrococcus lysodeikticus).